The primary structure comprises 231 residues: MMANIWWSLPLTLIVFFAARKLAARYKFPLLNPLLVAMVVIIPFLMLTGISYDSYFKGSEVLNDLLQPAVVALAYPLYEQLHQIRARWKSIITICFIGSVVAMVTGTSVALLMGASPEIAASILPKSVTTPIAMAVGGSIGGIPAISAVCVIFVGILGAVFGHTLLNAMRIRTKAARGLAMGTASHALGTARCAELDYQEGAFSSLALVLCGIITSLIAPFLFPIILAVMG.

Met-1 is a topological domain (periplasmic). A helical membrane pass occupies residues 2 to 22 (MANIWWSLPLTLIVFFAARKL). Residues 23–29 (AARYKFP) are Cytoplasmic-facing. A helical membrane pass occupies residues 30 to 50 (LLNPLLVAMVVIIPFLMLTGI). Residues 51-90 (SYDSYFKGSEVLNDLLQPAVVALAYPLYEQLHQIRARWKS) lie on the Periplasmic side of the membrane. A helical transmembrane segment spans residues 91–111 (IITICFIGSVVAMVTGTSVAL). Residues 112–118 (LMGASPE) lie on the Cytoplasmic side of the membrane. The next 2 membrane-spanning stretches (helical) occupy residues 119–139 (IAAS…VGGS) and 140–160 (IGGI…LGAV). Residues 161–208 (FGHTLLNAMRIRTKAARGLAMGTASHALGTARCAELDYQEGAFSSLAL) lie on the Cytoplasmic side of the membrane. A helical membrane pass occupies residues 209-229 (VLCGIITSLIAPFLFPIILAV). The Periplasmic portion of the chain corresponds to 230 to 231 (MG).

It belongs to the YohK (E.coli)/YwbG (IPA-22R) (B.subtilis) family.

Its subcellular location is the cell inner membrane. The sequence is that of Inner membrane protein YohK (yohK) from Escherichia coli (strain K12).